A 198-amino-acid chain; its full sequence is MATAEPSGRALRLSTPGPRPSGARDRAPGAAGPPSGQIGNRALRLGERTPAAVEKRGPYMVTRAPSIQAKLQKHRDLAKAVLRRKGMLGASPNRPDSSGKRSVKFNKGYTALSQSPDENLVSLDSDSDGELGSRYSSGYSSAEQVNQDVSRQLLQDGYHLDEIPDDEDLDLIPPKPMASSTCSCCWCCLGDSSSCTLQ.

Disordered regions lie at residues 1–58 (MATA…KRGP) and 83–146 (RRKG…EQVN). Ser-14, Ser-91, Ser-125, and Ser-127 each carry phosphoserine. The segment covering 134–146 (RYSSGYSSAEQVN) has biased composition (polar residues).

Belongs to the FAM219 family.

This Homo sapiens (Human) protein is Protein FAM219B (FAM219B).